The following is a 131-amino-acid chain: Ribosome-binding factor A (131 aa).

This sequence belongs to the RbfA family. In terms of assembly, monomer. Binds 30S ribosomal subunits, but not 50S ribosomal subunits or 70S ribosomes.

The protein resides in the cytoplasm. Its function is as follows. One of several proteins that assist in the late maturation steps of the functional core of the 30S ribosomal subunit. Associates with free 30S ribosomal subunits (but not with 30S subunits that are part of 70S ribosomes or polysomes). Required for efficient processing of 16S rRNA. May interact with the 5'-terminal helix region of 16S rRNA. The sequence is that of Ribosome-binding factor A from Picosynechococcus sp. (strain ATCC 27264 / PCC 7002 / PR-6) (Agmenellum quadruplicatum).